Consider the following 434-residue polypeptide: UDP-N-acetylenolpyruvoylglucosamine reductase (434 aa).

The region spanning 51 to 238 is the FAD-binding PCMH-type domain; the sequence is IGAAPAGVVE…TAVEFQLTTD (188 aa). Arg216 is a catalytic residue. Ser299 functions as the Proton donor in the catalytic mechanism. Glu425 is a catalytic residue.

It belongs to the MurB family. The cofactor is FAD.

The protein resides in the cytoplasm. It carries out the reaction UDP-N-acetyl-alpha-D-muramate + NADP(+) = UDP-N-acetyl-3-O-(1-carboxyvinyl)-alpha-D-glucosamine + NADPH + H(+). The protein operates within cell wall biogenesis; peptidoglycan biosynthesis. Cell wall formation. In Corynebacterium jeikeium (strain K411), this protein is UDP-N-acetylenolpyruvoylglucosamine reductase.